Here is a 334-residue protein sequence, read N- to C-terminus: N-acetyl-gamma-glutamyl-phosphate reductase (334 aa).

The active site involves Cys-154.

Belongs to the NAGSA dehydrogenase family. Type 1 subfamily.

It localises to the cytoplasm. The enzyme catalyses N-acetyl-L-glutamate 5-semialdehyde + phosphate + NADP(+) = N-acetyl-L-glutamyl 5-phosphate + NADPH + H(+). The protein operates within amino-acid biosynthesis; L-arginine biosynthesis; N(2)-acetyl-L-ornithine from L-glutamate: step 3/4. Functionally, catalyzes the NADPH-dependent reduction of N-acetyl-5-glutamyl phosphate to yield N-acetyl-L-glutamate 5-semialdehyde. This is N-acetyl-gamma-glutamyl-phosphate reductase from Salmonella typhimurium (strain LT2 / SGSC1412 / ATCC 700720).